The primary structure comprises 107 residues: MELKFAHIIVFFLLATSFETLMARKESDGPEVIQLLKEFQCKGKLRWPELIGVPTKLAKGIIEKENSLISNVHILLNGSPVTLDIRCDRVRLFDNILGYVVDIPVVG.

Positions 1–23 are cleaved as a signal peptide; it reads MELKFAHIIVFFLLATSFETLMA. A propeptide spanning residues 24 to 36 is cleaved from the precursor; sequence RKESDGPEVIQLL.

The protein belongs to the protease inhibitor I13 (potato type I serine protease inhibitor) family.

The sequence is that of Proteinase inhibitor 1 from Solanum tuberosum (Potato).